Here is a 681-residue protein sequence, read N- to C-terminus: DNA-directed RNA polymerase subunit beta' (681 aa).

Cysteine 69, cysteine 71, cysteine 87, and cysteine 90 together coordinate Zn(2+). Mg(2+) contacts are provided by aspartate 489, aspartate 491, and aspartate 493.

The protein belongs to the RNA polymerase beta' chain family. RpoC1 subfamily. In plastids the minimal PEP RNA polymerase catalytic core is composed of four subunits: alpha, beta, beta', and beta''. When a (nuclear-encoded) sigma factor is associated with the core the holoenzyme is formed, which can initiate transcription. Requires Mg(2+) as cofactor. The cofactor is Zn(2+).

The protein resides in the plastid. The protein localises to the chloroplast. The enzyme catalyses RNA(n) + a ribonucleoside 5'-triphosphate = RNA(n+1) + diphosphate. Its function is as follows. DNA-dependent RNA polymerase catalyzes the transcription of DNA into RNA using the four ribonucleoside triphosphates as substrates. The sequence is that of DNA-directed RNA polymerase subunit beta' from Nicotiana tomentosiformis (Tobacco).